The chain runs to 249 residues: Serine 3-dehydrogenase (249 aa).

Residue 6–30 coordinates NADP(+); it reads LITGATSGFGQATAQRFVKEGWKVI. Serine 135 contributes to the substrate binding site. The Proton acceptor role is filled by tyrosine 148.

Belongs to the short-chain dehydrogenases/reductases (SDR) family. Homotetramer.

It carries out the reaction L-serine + NADP(+) = aminoacetaldehyde + CO2 + NADPH. Functionally, catalyzes the oxidation of the hydroxyl group of serine to form 2-aminomalonate semialdehyde which is spontaneously converted into 2-aminoacetaldehyde and CO(2). Also acts on D-serine, L-glycerate, D-glycerate and 2-methyl-DL-serine. Does not act on O-methyl-DL-serine and L-threonine. The chain is Serine 3-dehydrogenase (sdh) from Rhizobium radiobacter (Agrobacterium tumefaciens).